The chain runs to 315 residues: Putative steroid dehydrogenase 2 (315 aa).

47–76 is a binding site for NADP(+); it reads ASWAVVTGATDGIGKSYSFELARRGFNVYI. Y202 is an active-site residue.

This sequence belongs to the short-chain dehydrogenases/reductases (SDR) family. 17-beta-HSD 3 subfamily.

The polypeptide is Putative steroid dehydrogenase 2 (stdh-2) (Caenorhabditis elegans).